The chain runs to 75 residues: Large ribosomal subunit protein bL31 (75 aa).

The protein belongs to the bacterial ribosomal protein bL31 family. Type A subfamily. As to quaternary structure, part of the 50S ribosomal subunit.

Functionally, binds the 23S rRNA. In Gluconobacter oxydans (strain 621H) (Gluconobacter suboxydans), this protein is Large ribosomal subunit protein bL31.